Reading from the N-terminus, the 339-residue chain is Methylthioribose-1-phosphate isomerase (339 aa).

Residues 50–52 (RGA), Arg-84, and Gln-186 each bind substrate. The active-site Proton donor is the Asp-227. Position 237-238 (237-238 (NK)) interacts with substrate.

The protein belongs to the eIF-2B alpha/beta/delta subunits family. MtnA subfamily.

The enzyme catalyses 5-(methylsulfanyl)-alpha-D-ribose 1-phosphate = 5-(methylsulfanyl)-D-ribulose 1-phosphate. The protein operates within amino-acid biosynthesis; L-methionine biosynthesis via salvage pathway; L-methionine from S-methyl-5-thio-alpha-D-ribose 1-phosphate: step 1/6. Its function is as follows. Catalyzes the interconversion of methylthioribose-1-phosphate (MTR-1-P) into methylthioribulose-1-phosphate (MTRu-1-P). The sequence is that of Methylthioribose-1-phosphate isomerase from Sulfurihydrogenibium sp. (strain YO3AOP1).